A 641-amino-acid chain; its full sequence is Acetyl-coenzyme A synthetase (641 aa).

Residues 186–189 (RGGK) and Thr304 contribute to the CoA site. ATP-binding positions include 380–382 (GEP), 404–409 (DTWWQT), Asp493, and Arg508. Ser516 serves as a coordination point for CoA. Arg519 contacts ATP. Mg(2+) is bound by residues Val530, His532, and Ile535. N6-acetyllysine is present on Lys602.

It belongs to the ATP-dependent AMP-binding enzyme family. Mg(2+) serves as cofactor. Acetylated. Deacetylation by the SIR2-homolog deacetylase activates the enzyme.

It carries out the reaction acetate + ATP + CoA = acetyl-CoA + AMP + diphosphate. Catalyzes the conversion of acetate into acetyl-CoA (AcCoA), an essential intermediate at the junction of anabolic and catabolic pathways. AcsA undergoes a two-step reaction. In the first half reaction, AcsA combines acetate with ATP to form acetyl-adenylate (AcAMP) intermediate. In the second half reaction, it can then transfer the acetyl group from AcAMP to the sulfhydryl group of CoA, forming the product AcCoA. This Gamma-proteobacterium EBAC31A08 protein is Acetyl-coenzyme A synthetase.